Consider the following 336-residue polypeptide: Phospholipase A1 (336 aa).

Residues 1-27 (MEENMNLKYLLLFVYFVQVLNCCYGHG) form the signal peptide. Positions 28–36 (DPLSYELDR) are excised as a propeptide. Cys40 and Cys123 are oxidised to a cystine. Ser173 acts as the Nucleophile in catalysis. The Charge relay system role is filled by Asp201. 2 cysteine pairs are disulfide-bonded: Cys212–Cys217 and Cys255–Cys263. Residue His265 is the Charge relay system of the active site. Cystine bridges form between Cys280/Cys304, Cys281/Cys329, and Cys297/Cys302.

It belongs to the AB hydrolase superfamily. Lipase family. In terms of tissue distribution, expressed by the venom gland.

It is found in the secreted. It carries out the reaction a 1,2-diacyl-sn-glycero-3-phosphocholine + H2O = a 2-acyl-sn-glycero-3-phosphocholine + a fatty acid + H(+). In terms of biological role, catalyzes the hydrolysis of phosphatidylcholine with phospholipase A1 activity. Induces hemolytic activity. Acts as an allergen. The polypeptide is Phospholipase A1 (Vespula vulgaris (Yellow jacket)).